The primary structure comprises 365 residues: Flagellar P-ring protein (365 aa).

Residues 1–21 (MIKRIISIVFLLLTLPQLALA) form the signal peptide.

This sequence belongs to the FlgI family. As to quaternary structure, the basal body constitutes a major portion of the flagellar organelle and consists of four rings (L,P,S, and M) mounted on a central rod.

It is found in the periplasm. It localises to the bacterial flagellum basal body. Functionally, assembles around the rod to form the L-ring and probably protects the motor/basal body from shearing forces during rotation. The protein is Flagellar P-ring protein of Geobacter metallireducens (strain ATCC 53774 / DSM 7210 / GS-15).